Reading from the N-terminus, the 77-residue chain is Acyl carrier protein (77 aa).

A Carrier domain is found at 2–77; it reads SNIEERVKKI…AAIDYVTANQ (76 aa). At S37 the chain carries O-(pantetheine 4'-phosphoryl)serine.

The protein belongs to the acyl carrier protein (ACP) family. 4'-phosphopantetheine is transferred from CoA to a specific serine of apo-ACP by AcpS. This modification is essential for activity because fatty acids are bound in thioester linkage to the sulfhydryl of the prosthetic group.

Its subcellular location is the cytoplasm. The protein operates within lipid metabolism; fatty acid biosynthesis. Its function is as follows. Carrier of the growing fatty acid chain in fatty acid biosynthesis. This is Acyl carrier protein from Colwellia psychrerythraea (strain 34H / ATCC BAA-681) (Vibrio psychroerythus).